The chain runs to 269 residues: Meiotically up-regulated gene 43 protein (269 aa).

It localises to the mitochondrion. Its function is as follows. Has a role in meiosis. The protein is Meiotically up-regulated gene 43 protein (mug43) of Schizosaccharomyces pombe (strain 972 / ATCC 24843) (Fission yeast).